Here is a 209-residue protein sequence, read N- to C-terminus: Mitochondrial import inner membrane translocase subunit Tim23 (209 aa).

3 helical membrane passes run 73–93, 125–145, and 181–197; these read FELAFFTIGGCCMTGAAFGAL, ALWANTLGSLALLYSAFGVII, and GLAGLTLTSVYALYNNW.

It belongs to the Tim17/Tim22/Tim23 family. In terms of assembly, component of the TIM23 complex at least composed of TIMM23, TIMM17 (TIMM17A or TIMM17B) and TIMM50; within this complex, directly interacts with TIMM50. The complex interacts with the TIMM44 component of the PAM complex and with DNAJC15. Upon mitochondrial depolarization, interacts with PINK1; the interaction is required for PINK1 accumulation at the outer mitochondrial membrane, kinase activation by autophosphorylation and PRKN recruitement to mitochondria.

The protein localises to the mitochondrion inner membrane. In terms of biological role, essential component of the TIM23 complex, a complex that mediates the translocation of transit peptide-containing proteins across the mitochondrial inner membrane. Has a role in the activation of stress-induced mitophagy by protecting PINK1 from OMA1-mediated degradation and facilitating its accumulation at the outer mitochondrial membrane in response to depolarization. The sequence is that of Mitochondrial import inner membrane translocase subunit Tim23 (Timm23) from Rattus norvegicus (Rat).